The sequence spans 307 residues: Heme A synthase (307 aa).

Residues 1-8 lie on the Cytoplasmic side of the membrane; the sequence is MQHNRYLK. Residues 9-29 traverse the membrane as a helical segment; it reads WFAVAATVGMLLILLGGALVT. Topologically, residues 30 to 56 are extracellular; that stretch reads KTDSGLGCGRNWPDCNGSLIPKEITPE. Residues Cys37 and Cys44 are joined by a disulfide bond. A helical membrane pass occupies residues 57–77; it reads VLIEFSHRLVTGVVSISILVL. Glu60 is an active-site residue. His63 lines the heme o pocket. Residues 78–92 lie on the Cytoplasmic side of the membrane; sequence TVWTWRKLGHIREVK. The chain crosses the membrane as a helical span at residues 93–113; that stretch reads LLGFLAMFFLIAQALIGAAQV. The Extracellular segment spans residues 114–123; sequence LWGQGDFILA. A helical transmembrane segment spans residues 124 to 144; it reads LHFGISLISFAAVLLLSMIVF. A heme o-binding site is contributed by His125. The Cytoplasmic segment spans residues 145–161; sequence EVDRKFDADNVFIGKKL. A helical transmembrane segment spans residues 162-182; that stretch reads RWHTIAVTIYSYLVVYTGALV. At 183–218 the chain is on the extracellular side; it reads RHTDSSLICPDWPFCYNETPLASPNNMYEWVQMGHR. A disulfide bridge links Cys191 with Cys197. His217 is a binding site for heme b. A helical membrane pass occupies residues 219–239; sequence LAVLIIFIWIAYITWHAVKEY. Topologically, residues 240–247 are cytoplasmic; that stretch reads KNQRVVYY. Residues 248-268 traverse the membrane as a helical segment; the sequence is GWIIAFTIVFLQVIAGMLVVL. Over 269–276 the chain is Extracellular; the sequence is TKLNLTVA. A helical transmembrane segment spans residues 277–297; the sequence is LMHSLLISLLFGLLCYMIMLV. Position 279 (His279) interacts with heme b. Residues 298–307 are Cytoplasmic-facing; it reads ARSNYNEKMK.

The protein belongs to the COX15/CtaA family. Type 1 subfamily. As to quaternary structure, interacts with CtaB. Heme b serves as cofactor.

The protein resides in the cell membrane. The enzyme catalyses Fe(II)-heme o + 2 A + H2O = Fe(II)-heme a + 2 AH2. It participates in porphyrin-containing compound metabolism; heme A biosynthesis; heme A from heme O: step 1/1. In terms of biological role, catalyzes the conversion of heme O to heme A by two successive hydroxylations of the methyl group at C8. The first hydroxylation forms heme I, the second hydroxylation results in an unstable dihydroxymethyl group, which spontaneously dehydrates, resulting in the formyl group of heme A. The protein is Heme A synthase of Lysinibacillus sphaericus (strain C3-41).